A 963-amino-acid chain; its full sequence is Phosphoenolpyruvate carboxylase (963 aa).

Ser-11 carries the phosphoserine modification. Catalysis depends on residues His-172 and Lys-600.

This sequence belongs to the PEPCase type 1 family. In terms of assembly, homotetramer. It depends on Mg(2+) as a cofactor.

Its subcellular location is the cytoplasm. It carries out the reaction oxaloacetate + phosphate = phosphoenolpyruvate + hydrogencarbonate. With respect to regulation, by light-reversible phosphorylation. Through the carboxylation of phosphoenolpyruvate (PEP) it forms oxaloacetate, a four-carbon dicarboxylic acid source for the tricarboxylic acid cycle. The protein is Phosphoenolpyruvate carboxylase (PPC) of Picea abies (Norway spruce).